The primary structure comprises 1214 residues: MVNPLDSVNPSHALFEGFVQAQTCKETQQNFTELCRHLQVDPKDYKHFYSKLKDRLNYWKAKDLWQKIDKRAAHPDYDQGKACHQNKCLVLGAGPCGLRTAIELALLGAQVVVLEKRSSFTRNNVLHLWPFTIKDLLNLGAKKFYGRFCSGSIHHISIRQLQLILLKVALFLGVEVHTGVAFEGLNEPSGSAGWRANVSPKSHPVADFQFDVFISAGGGKYVPDGFKIKELRGKLAIGITANFVNRHTKQEAQVQEISGVARIYNQQFFQALQSEIGVDLENIVYYKDDTHYFVMTAKKASLLKKGVIKQDFSDADKLLAPSNVNQEALQDYAFEACDFSTEHLLPNLEFAKNHKGQADVAMFDFTCMQRAESASLVKERNGKRLLIGLVGDSLVEPFWPLGTGIARGFLGAFDAAWMVRSWGKGVQPMEVLAERESVYQLLSQTTPENTSKNYMAYSIDPSTRYPNINLSSIKPRQVKRLYEAEEQESKPNKLKKPDIKAKPRKDSMKRLEELLSWCQKNTVGYEHVKVKDLSESWRSGLALCALIHSFRPELVDMSALDEYNIIKNNKLAFDLMEKEFGITPIMRPGDMMTCGKIDQLSMVVYLTQIRNALTEKDTPAAQSNTLSLSRKRSAVAFLNTLKRNSLQRHKDRLASVKGPRQQNMKEKEEKKDVKEESLSSETSACEPCYFCKKHLYVVERESAEGKFFHRSCFNCFQCGSTLRQGGYSFHSDNGRFYCELHSLAEEEEGDEGHGGAQNHTENGSKEDKNGETTAASSPPAHLSIKRKGSYKISVDPDFDESTEFPAPDQDEPPDLEESHQPPKPSELSAENTNMENQQHNINPVPAPRGSRAPLPKPRTVHNVVHEPCNIPEEAEQIPEEPKPKPSLRKLQQSEEEKVDLLSQDSDSETRGSSSAASTSSSSKQHEEEGYWSGGTTWGKSHREQRNRPCIRRKSEPPLPLTGHSQHGKMRSKFSPWNLSSPRLQQRFSVHRVPAGQSQPDQYVSEDDNEDDEDEDEEDLQAEHYLDCEGADFEFSDSEKRNLKRMKTLERKAKMTEIQRFHKAQSIQRRLEEIEVTFKELEEKGVELERALRGETGTGDPEIIDQWIELVQEKNNLLSEESDLMVASRQLELEDKQSMLEMELRRYMEMDDSEKSPEQQKHEAEILQEMLDVVDMRDSLVAFLEEKRLKEVNDQFNSSLDAKRRSTTASQVHWE.

Positions 1-488 (MVNPLDSVNP…KRLYEAEEQE (488 aa)) are monooxygenase domain. FAD-binding positions include cysteine 96, 115 to 117 (EKR), 122 to 124 (RNN), phenylalanine 182, tyrosine 292, and aspartate 392. Residues 484-505 (AEEQESKPNKLKKPDIKAKPRK) are disordered. The 107-residue stretch at 508–614 (MKRLEELLSW…YLTQIRNALT (107 aa)) folds into the Calponin-homology (CH) domain. The disordered stretch occupies residues 649 to 676 (HKDRLASVKGPRQQNMKEKEEKKDVKEE). Over residues 663–676 (NMKEKEEKKDVKEE) the composition is skewed to basic and acidic residues. The LIM zinc-binding domain maps to 686 to 748 (EPCYFCKKHL…ELHSLAEEEE (63 aa)). Zn(2+) is bound by residues cysteine 688, cysteine 691, histidine 709, cysteine 712, cysteine 715, cysteine 718, cysteine 738, and histidine 741. A disordered region spans residues 747 to 1019 (EEGDEGHGGA…DDEDEDEEDL (273 aa)). The span at 796-815 (PDFDESTEFPAPDQDEPPDL) shows a compositional bias: acidic residues. Over residues 828-841 (SAENTNMENQQHNI) the composition is skewed to polar residues. Residues 910 to 922 (RGSSSAASTSSSS) are compositionally biased toward low complexity. Polar residues predominate over residues 974 to 987 (SPWNLSSPRLQQRF). Residues 1003–1019 (VSEDDNEDDEDEDEEDL) show a composition bias toward acidic residues. The bMERB domain maps to 1053–1199 (KMTEIQRFHK…EVNDQFNSSL (147 aa)). Positions 1061 to 1131 (HKAQSIQRRL…DLMVASRQLE (71 aa)) form a coiled coil. The segment at 1194–1214 (QFNSSLDAKRRSTTASQVHWE) is disordered.

The protein belongs to the Mical family. It depends on FAD as a cofactor.

Its subcellular location is the cytoplasm. The protein resides in the cytoskeleton. The protein localises to the midbody. It localises to the endosome membrane. The enzyme catalyses L-methionyl-[F-actin] + NADPH + O2 + H(+) = L-methionyl-(R)-S-oxide-[F-actin] + NADP(+) + H2O. It catalyses the reaction NADPH + O2 + H(+) = H2O2 + NADP(+). Its function is as follows. Monooxygenase that promotes depolymerization of F-actin by mediating oxidation of specific methionine residues on actin to form methionine-sulfoxide, resulting in actin filament disassembly and prevent repolymerization. May be involved in endosomal tubule extension and neosynthesized protein export. In Danio rerio (Zebrafish), this protein is [F-actin]-monooxygenase mical1 (mical1).